The following is a 466-amino-acid chain: Ribulose bisphosphate carboxylase large chain (466 aa).

Lys-5 carries the N6,N6,N6-trimethyllysine modification. Positions 114 and 164 each coordinate substrate. Lys-166 (proton acceptor) is an active-site residue. Position 168 (Lys-168) interacts with substrate. Residues Lys-192, Asp-194, and Glu-195 each coordinate Mg(2+). At Lys-192 the chain carries N6-carboxylysine. His-285 serves as the catalytic Proton acceptor. Substrate-binding residues include Arg-286, His-318, and Ser-370.

It belongs to the RuBisCO large chain family. Type I subfamily. In terms of assembly, heterohexadecamer of 8 large chains and 8 small chains; disulfide-linked. The disulfide link is formed within the large subunit homodimers. Requires Mg(2+) as cofactor. The disulfide bond which can form in the large chain dimeric partners within the hexadecamer appears to be associated with oxidative stress and protein turnover.

It is found in the plastid. Its subcellular location is the chloroplast. The enzyme catalyses 2 (2R)-3-phosphoglycerate + 2 H(+) = D-ribulose 1,5-bisphosphate + CO2 + H2O. It carries out the reaction D-ribulose 1,5-bisphosphate + O2 = 2-phosphoglycolate + (2R)-3-phosphoglycerate + 2 H(+). In terms of biological role, ruBisCO catalyzes two reactions: the carboxylation of D-ribulose 1,5-bisphosphate, the primary event in carbon dioxide fixation, as well as the oxidative fragmentation of the pentose substrate in the photorespiration process. Both reactions occur simultaneously and in competition at the same active site. The protein is Ribulose bisphosphate carboxylase large chain of Berzelia lanuginosa (Buttonbush).